The following is a 458-amino-acid chain: Bone morphogenetic protein 3 (458 aa).

A signal peptide spans 1–23 (MAECRPWLVLWVGCCGCLCLALG). The propeptide occupies 24–348 (ELLNDGLLAV…EQTLKKARRK (325 aa)). A glycan (N-linked (GlcNAc...) asparagine) is linked at asparagine 107. Disordered stretches follow at residues 244–275 (DSVVSSLHGPHTPLALKPNRKTEKAEQRKKRS) and 303–335 (ERKPYKNLQGRQNEKDKNKKKLRKGSRQKSQTL). Over residues 320–329 (NKKKLRKGSR) the composition is skewed to basic residues. 3 disulfide bridges follow: cysteine 356–cysteine 423, cysteine 385–cysteine 455, and cysteine 389–cysteine 457. N-linked (GlcNAc...) asparagine glycosylation is present at asparagine 449.

It belongs to the TGF-beta family. As to quaternary structure, homodimer. Can form heterodimers with ADMP, BMP-2-I and/or BMP-2-II, and DERRIERE.

The protein resides in the secreted. Dorsalizing factor. Antagonizes mesoderm formation by ventralizing BMPs. The protein is Bone morphogenetic protein 3 (bmp3) of Xenopus laevis (African clawed frog).